Reading from the N-terminus, the 274-residue chain is Imidazole glycerol phosphate synthase subunit HisF (274 aa).

Active-site residues include Asp11 and Asp134.

Belongs to the HisA/HisF family. As to quaternary structure, heterodimer of HisH and HisF.

It localises to the cytoplasm. It catalyses the reaction 5-[(5-phospho-1-deoxy-D-ribulos-1-ylimino)methylamino]-1-(5-phospho-beta-D-ribosyl)imidazole-4-carboxamide + L-glutamine = D-erythro-1-(imidazol-4-yl)glycerol 3-phosphate + 5-amino-1-(5-phospho-beta-D-ribosyl)imidazole-4-carboxamide + L-glutamate + H(+). It functions in the pathway amino-acid biosynthesis; L-histidine biosynthesis; L-histidine from 5-phospho-alpha-D-ribose 1-diphosphate: step 5/9. In terms of biological role, IGPS catalyzes the conversion of PRFAR and glutamine to IGP, AICAR and glutamate. The HisF subunit catalyzes the cyclization activity that produces IGP and AICAR from PRFAR using the ammonia provided by the HisH subunit. The chain is Imidazole glycerol phosphate synthase subunit HisF from Methanosphaera stadtmanae (strain ATCC 43021 / DSM 3091 / JCM 11832 / MCB-3).